Reading from the N-terminus, the 376-residue chain is Alcohol dehydrogenase 6 (376 aa).

Zn(2+)-binding residues include cysteine 47, histidine 69, cysteine 99, cysteine 102, cysteine 105, cysteine 113, and cysteine 175. Residues 200 to 205 (GLGGVG), aspartate 224, arginine 229, 293 to 295 (VGA), and arginine 371 each bind NAD(+).

The protein belongs to the zinc-containing alcohol dehydrogenase family. Class-V subfamily. In terms of assembly, dimer. Zn(2+) serves as cofactor.

Its subcellular location is the cytoplasm. The catalysed reaction is a primary alcohol + NAD(+) = an aldehyde + NADH + H(+). It catalyses the reaction a secondary alcohol + NAD(+) = a ketone + NADH + H(+). Alcohol dehydrogenase. Catalyzes the NAD-dependent oxidation of primary alcohols to the corresponding aldehydes. Oxidizes secondary alcohols to the corresponding ketones. The sequence is that of Alcohol dehydrogenase 6 (Adh6) from Rattus norvegicus (Rat).